The following is a 181-amino-acid chain: Large ribosomal subunit protein uL6 (181 aa).

The protein belongs to the universal ribosomal protein uL6 family. In terms of assembly, part of the 50S ribosomal subunit.

Its function is as follows. This protein binds to the 23S rRNA, and is important in its secondary structure. It is located near the subunit interface in the base of the L7/L12 stalk, and near the tRNA binding site of the peptidyltransferase center. This chain is Large ribosomal subunit protein uL6, found in Synechococcus sp. (strain CC9605).